A 94-amino-acid chain; its full sequence is MFKFNAEVRQSQGKGASRRLRHNGQIPAIVYGGSEAPVSIVLNHDDLNNAQVHDAFYTDVITLVIEGKEVAVKAQAMQRHPFKPKLVHIDFKRV.

The tract at residues 1 to 20 (MFKFNAEVRQSQGKGASRRL) is disordered.

This sequence belongs to the bacterial ribosomal protein bL25 family. As to quaternary structure, part of the 50S ribosomal subunit; part of the 5S rRNA/L5/L18/L25 subcomplex. Contacts the 5S rRNA. Binds to the 5S rRNA independently of L5 and L18.

In terms of biological role, this is one of the proteins that binds to the 5S RNA in the ribosome where it forms part of the central protuberance. This is Large ribosomal subunit protein bL25 from Pasteurella multocida (strain Pm70).